We begin with the raw amino-acid sequence, 255 residues long: MQPLLLLLAFLLPTGAEAGEIIGGRESRPHSRPYMAYLQIQSPAGQSRCGGFLVREDFVLTAAHCWGSNINVTLGAHNIQRRENTQQHITARRAIRHPQYNQRTIQNDIMLLQLSRRVRRNRNVNPVALPRAQEGLRPGTLCTVAGWGRVSMRRGTDTLREVQLRVQRDRQCLRIFGSYDPRRQICVGDRRERKAAFKGDSGGPLLCNNVAHGIVSYGKSSGVPPEVFTRVSSFLPWIRTTMRSFKLLDQMETPL.

The N-terminal stretch at 1–18 (MQPLLLLLAFLLPTGAEA) is a signal peptide. Positions 19 to 20 (GE) are cleaved as a propeptide — activation peptide. The tract at residues 21–25 (IIGGR) is important for antimicrobial activity. In terms of domain architecture, Peptidase S1 spans 21 to 243 (IIGGRESRPH…FLPWIRTTMR (223 aa)). Cys-49 and Cys-65 are joined by a disulfide. Catalysis depends on His-64, which acts as the Charge relay system. An N-linked (GlcNAc...) (complex) asparagine; alternate glycan is attached at Asn-71. Residue Asn-71 is glycosylated (N-linked (GlcNAc...) (paucimannose) asparagine; alternate). The important for antimicrobial activity stretch occupies residues 97–111 (HPQYNQRTIQNDIML). Residue Asp-108 is the Charge relay system of the active site. Disulfide bonds link Cys-142-Cys-207 and Cys-172-Cys-186. Ser-201 serves as the catalytic Charge relay system. Positions 245–255 (FKLLDQMETPL) are excised as a propeptide.

Belongs to the peptidase S1 family. As to quaternary structure, (Microbial infection) Interacts with CASP4; the interaction is promoted by the Td92 surface protein of the periodontal pathogen T.denticola and leads to CASP4 activation. In terms of assembly, (Microbial infection) Interacts with M.tuberculosis protein Rv3364c. (Microbial infection) Interacts with S.aureus EapH1; EapH1 acts as a reversible inhibitor of CATG activity. In terms of processing, two C-terminal truncation variants have been identified, one which ends at Arg-243 and one which ends at Ser-244. Expressed in neutrophils (at protein level). Expressed in B cells.

Its subcellular location is the cell membrane. It localises to the cytoplasmic granule. It is found in the secreted. The protein resides in the cytoplasm. The protein localises to the cytosol. Its subcellular location is the lysosome. It localises to the nucleus. It carries out the reaction Specificity similar to chymotrypsin C.. Its activity is regulated as follows. Inhibited by soybean trypsin inhibitor, benzamidine, the synthetic peptide R13K, Z-Gly-Leu-Phe-CH2Cl, phenylmethylsulfonyl fluoride, 3,4-dichloroisocoumarin, DFP, SBTI and alpha-1-antitrypsin. Inhibited by LPS from P.aeruginosa but not by LPS from S.minnesota. Not inhibited by elastinal, CMK, TLCK, ETDA or leupeptin. (Microbial infection) Inhibited reversibly by S.aureus EapH1. With respect to regulation, (Microbial infection) Activity is induced by the Td92 surface protein of the periodontal pathogen T.denticola. Its function is as follows. Serine protease with trypsin- and chymotrypsin-like specificity. Also displays antibacterial activity against Gram-negative and Gram-positive bacteria independent of its protease activity. Prefers Phe and Tyr residues in the P1 position of substrates but also cleaves efficiently after Trp and Leu. Shows a preference for negatively charged amino acids in the P2' position and for aliphatic amino acids both upstream and downstream of the cleavage site. Required for recruitment and activation of platelets which is mediated by the F2RL3/PAR4 platelet receptor. Binds reversibly to and stimulates B cells and CD4(+) and CD8(+) T cells. Also binds reversibly to natural killer (NK) cells and enhances NK cell cytotoxicity through its protease activity. Cleaves complement C3. Cleaves vimentin. Cleaves thrombin receptor F2R/PAR1 and acts as either an agonist or an inhibitor, depending on the F2R cleavage site. Cleavage of F2R at '41-Arg-|-Ser-42' results in receptor activation while cleavage at '55-Phe-|-Trp-56' results in inhibition of receptor activation. Cleaves the synovial mucin-type protein PRG4/lubricin. Cleaves and activates IL36G which promotes expression of chemokines CXCL1 and CXLC8 in keratinocytes. Cleaves IL33 into mature forms which have greater activity than the unprocessed form. Cleaves coagulation factor F8 to produce a partially activated form. Also cleaves and activates coagulation factor F10. Cleaves leukocyte cell surface protein SPN/CD43 to release its extracellular domain and trigger its intramembrane proteolysis by gamma-secretase, releasing the CD43 cytoplasmic tail chain (CD43-ct) which translocates to the nucleus. Cleaves CCL5/RANTES to produce RANTES(4-68) lacking the N-terminal three amino acids which exhibits reduced chemotactic and antiviral activities. During apoptosis, cleaves SMARCA2/BRM to produce a 160 kDa cleavage product which localizes to the cytosol. Cleaves myelin basic protein MBP in B cell lysosomes at '224-Phe-|-Lys-225' and '248-Phe-|-Ser-249', degrading the major immunogenic MBP epitope and preventing the activation of MBP-specific autoreactive T cells. Cleaves annexin ANXA1 and antimicrobial peptide CAMP to produce peptides which act on neutrophil N-formyl peptide receptors to enhance the release of CXCL2. Acts as a ligand for the N-formyl peptide receptor FPR1, enhancing phagocyte chemotaxis. Has antibacterial activity against the Gram-negative bacteria N.gonorrhoeae and P.aeruginosa. Likely to act against N.gonorrhoeae by interacting with N.gonorrhoeae penA/PBP2. Exhibits potent antimicrobial activity against the Gram-positive bacterium L.monocytogenes. Has antibacterial activity against the Gram-positive bacterium S.aureus and degrades S.aureus biofilms, allowing polymorphonuclear leukocytes to penetrate the biofilm and phagocytose bacteria. Has antibacterial activity against M.tuberculosis. Mediates CASP4 activation induced by the Td92 surface protein of the periodontal pathogen T.denticola, causing production and secretion of IL1A and leading to pyroptosis of gingival fibroblasts. Induces platelet aggregation which is strongly potentiated in the presence of ELANE. The protein is Cathepsin G (CTSG) of Homo sapiens (Human).